Reading from the N-terminus, the 299-residue chain is MSEFRSGFVCFVGRPNTGKSTLTNALVGTKVAITSNRPQTTRHTIRGIVHRDEFQIILVDTPGLHRPRTLLGQRLNDLVKTTYSEVDVIGLCIPADEAIGPGDRWIHEQIRAVAPRTTLVVIVTKIDKVPKDRVAAQLMAVSELIGPDAEIVPVSATTGEQLDVLTDVLAGKLPPGPAFYPDGELTDEPEETLMAELIREAALEGVRDELPHSLAVVIDEVSPREDRDDLIDVHAILYVERDSQKGIVIGKGGARLREVGTAARLQIEKLLGTKVYLDLRVKIAKNWQRDPKQLGRLGF.

Residues 5 to 175 (RSGFVCFVGR…TDVLAGKLPP (171 aa)) enclose the Era-type G domain. The interval 13–20 (GRPNTGKS) is G1. 13-20 (GRPNTGKS) lines the GTP pocket. The G2 stretch occupies residues 39-43 (QTTRH). A G3 region spans residues 60-63 (DTPG). Residues 60–64 (DTPGL) and 124–127 (TKID) contribute to the GTP site. The segment at 124-127 (TKID) is G4. Residues 154 to 156 (VSA) form a G5 region. The 80-residue stretch at 206 to 285 (VRDELPHSLA…YLDLRVKIAK (80 aa)) folds into the KH type-2 domain.

The protein belongs to the TRAFAC class TrmE-Era-EngA-EngB-Septin-like GTPase superfamily. Era GTPase family. Monomer.

Its subcellular location is the cell envelope. It localises to the secreted. It is found in the cell wall. Functionally, exhibits GTPase activity. Binds RNA but is probably not involved in ribosome assembly in mycobacteria. This Mycobacterium sp. (strain JLS) protein is GTPase Era.